Here is a 129-residue protein sequence, read N- to C-terminus: Prefoldin subunit 6 (129 aa).

At alanine 2 the chain carries N-acetylalanine. N6-acetyllysine is present on lysine 21. Residue lysine 66 is modified to N6-acetyllysine; alternate. Lysine 66 is covalently cross-linked (Glycyl lysine isopeptide (Lys-Gly) (interchain with G-Cter in SUMO1); alternate). A Glycyl lysine isopeptide (Lys-Gly) (interchain with G-Cter in SUMO2); alternate cross-link involves residue lysine 66.

The protein belongs to the prefoldin subunit beta family. As to quaternary structure, heterohexamer of two PFD-alpha type and four PFD-beta type subunits. Component of the PAQosome complex which is responsible for the biogenesis of several protein complexes and which consists of R2TP complex members RUVBL1, RUVBL2, RPAP3 and PIH1D1, URI complex members PFDN2, PFDN6, PDRG1, UXT and URI1 as well as ASDURF, POLR2E and DNAAF10/WDR92.

In terms of biological role, binds specifically to cytosolic chaperonin (c-CPN) and transfers target proteins to it. Binds to nascent polypeptide chain and promotes folding in an environment in which there are many competing pathways for nonnative proteins. The protein is Prefoldin subunit 6 (PFDN6) of Canis lupus familiaris (Dog).